A 191-amino-acid chain; its full sequence is dCTP deaminase, dUMP-forming (191 aa).

DCTP is bound by residues 101–106 (KSSLGR), aspartate 119, 127–129 (TLE), glutamine 148, tyrosine 162, and glutamine 174. Residue glutamate 129 is the Proton donor/acceptor of the active site. A disordered region spans residues 163–191 (GSAKYGSRYQGQRGPTPSRSYQNFHRTPI). The span at 171–191 (YQGQRGPTPSRSYQNFHRTPI) shows a compositional bias: polar residues.

It belongs to the dCTP deaminase family. Homotrimer.

It carries out the reaction dCTP + 2 H2O = dUMP + NH4(+) + diphosphate. Its pathway is pyrimidine metabolism; dUMP biosynthesis; dUMP from dCTP: step 1/1. Functionally, bifunctional enzyme that catalyzes both the deamination of dCTP to dUTP and the hydrolysis of dUTP to dUMP without releasing the toxic dUTP intermediate. The protein is dCTP deaminase, dUMP-forming of Nocardioides sp. (strain ATCC BAA-499 / JS614).